The chain runs to 39 residues: uncharacterized protein (39 aa).

The protein belongs to the asfivirus C84L family.

This is an uncharacterized protein from African swine fever virus (isolate Warthog/Namibia/Wart80/1980) (ASFV).